We begin with the raw amino-acid sequence, 717 residues long: Ribosomal RNA large subunit methyltransferase K/L (717 aa).

The THUMP domain occupies 44–155; it reads DAYKVCIYSY…KQFVNVFLCL (112 aa).

The protein belongs to the methyltransferase superfamily. RlmKL family.

Its subcellular location is the cytoplasm. The enzyme catalyses guanosine(2445) in 23S rRNA + S-adenosyl-L-methionine = N(2)-methylguanosine(2445) in 23S rRNA + S-adenosyl-L-homocysteine + H(+). It catalyses the reaction guanosine(2069) in 23S rRNA + S-adenosyl-L-methionine = N(2)-methylguanosine(2069) in 23S rRNA + S-adenosyl-L-homocysteine + H(+). Specifically methylates the guanine in position 2445 (m2G2445) and the guanine in position 2069 (m7G2069) of 23S rRNA. This is Ribosomal RNA large subunit methyltransferase K/L from Francisella tularensis subsp. tularensis (strain WY96-3418).